A 460-amino-acid chain; its full sequence is Ribosomal protein uS12 methylthiotransferase RimO (460 aa).

An MTTase N-terminal domain is found at 18 to 134 (MKIHITSLGC…VTSIVAEVLR (117 aa)). [4Fe-4S] cluster is bound by residues Cys27, Cys63, Cys97, Cys171, Cys175, and Cys178. Residues 157-387 (STPFHYAYVK…MVLQQEISLS (231 aa)) form the Radical SAM core domain. The TRAM domain occupies 390 to 456 (QEWIGKTLEV…HYDLMGEAID (67 aa)).

The protein belongs to the methylthiotransferase family. RimO subfamily. The cofactor is [4Fe-4S] cluster.

The protein localises to the cytoplasm. It catalyses the reaction L-aspartate(89)-[ribosomal protein uS12]-hydrogen + (sulfur carrier)-SH + AH2 + 2 S-adenosyl-L-methionine = 3-methylsulfanyl-L-aspartate(89)-[ribosomal protein uS12]-hydrogen + (sulfur carrier)-H + 5'-deoxyadenosine + L-methionine + A + S-adenosyl-L-homocysteine + 2 H(+). Its function is as follows. Catalyzes the methylthiolation of an aspartic acid residue of ribosomal protein uS12. The protein is Ribosomal protein uS12 methylthiotransferase RimO of Heliobacterium modesticaldum (strain ATCC 51547 / Ice1).